The following is a 515-amino-acid chain: MLILWLVGAFIVLIQWIYRLNRDYCILGFFAKRIRTKNGQNPESIAPLVKGSTIFANSFDLYGKDHSGVFEHSRDCAKKLGKSYAEYAMGTAIYNVIDADSAERVLNDPNLINKGTIYDFLHPFLRTGLLTSTGKKWHARRKMLSPTFHFNILNQFQEIFITESLKFLEQFKGNDEAIISLNEVIPRFTLNSICETAMGVKLDEMAEKGDRYRENFRQIEECFIRRMSNPLLWSDTLFKMFAEKDYASALDVVHGFSSEIIAKRRDQLNDEIDSRGNTQTAEDELFTSKKRFAMLDTLILAEKDGLIDHIGICEEVDTLMFEGYDTTSIGLMFGLMNMSLYPEEQEKCYQEIQANIDDELNILNIGQLNKLKNLEYFIKETMRLFPSVPAMGRETTRETELSNGLILPKGSQIFVHVFDIHRNPEYWDSPEEFRPERFLPENSQNRHTYAYIPFSAGQRNCIGQKFAMQEMKTLMVALLKQFQILPEIDPKTIVFQTGLTLRTKNQIHVKLVRRK.

Heme-binding residues include glutamate 322 and cysteine 461.

This sequence belongs to the cytochrome P450 family. Heme serves as cofactor.

The protein localises to the endoplasmic reticulum membrane. The protein resides in the microsome membrane. In terms of biological role, may be involved in the metabolism of insect hormones and in the breakdown of synthetic insecticides. The protein is Probable cytochrome P450 4p3 (Cyp4p3) of Drosophila melanogaster (Fruit fly).